Reading from the N-terminus, the 626-residue chain is MSLISAVPLASSCVSKSLISSVREHTALRRAIATLQMSRRGKSVAASIRMSSATAGSDDGVKRRIGDYHSNLWDDNFIQSLSSPYGASSYGEHADRLIGEVKEIFNSFSIADGELISPVNDLLQQLWMVDNVERLGIDRHFQTEIKVALDYVYRYWSEEGIGCGRDSAFTDLNTTALAFRIFRLHGYTVSSDVFEHFKDQKGQFAASANDTELQTRSVFNLFRASLIAFPEEKVLEEAEKFAAAYLKAALQTLPVSGLSREIQYVFDYRWHSNLPRLEARSYIDILADNTISGTPDANTKKLLELAKLEFNIFHSVQQKELQCLWRWWKEWGCPELTFIRHRYVEFYTLVSGIDMVPEHATFRLSCVKTCHLITILDDMYDTFGTIDELRLFTAAVKRWDPSATECLPEYMKGVYMVLYETVNEMAKEAQKSQRRDTLGYVRQALEDYIGSYLKEAEWIATGYVPTFQEYFENGKLSSGHRIATLQPILTLSIPFPHHILQEIDFPSKFNDYAASILRLRGDTRCYKADSARGEEASCISCYMRDNPGSTQEDALNLINGMIEDMIKKLNWEFLRPDNNAPISSKKHAFNISRGLHHFYNYRDGYSVASKETKDLVIKTVLEPVLM.

The N-terminal 45 residues, 1–45 (MSLISAVPLASSCVSKSLISSVREHTALRRAIATLQMSRRGKSVA), are a transit peptide targeting the chloroplast. Residues Asp377, Asp381, and Asp529 each coordinate Mg(2+). The DDXXD motif signature appears at 377-381 (DDMYD).

The protein belongs to the terpene synthase family. Tpsd subfamily. It depends on Mg(2+) as a cofactor. Requires Mn(2+) as cofactor.

It is found in the plastid. The protein resides in the chloroplast. It carries out the reaction (2E)-geranyl diphosphate = (+)-car-3-ene + diphosphate. The protein operates within terpene metabolism; oleoresin biosynthesis. It functions in the pathway secondary metabolite biosynthesis; terpenoid biosynthesis. In terms of biological role, monoterpene synthase (TPS) involved in the biosynthesis of monoterpene natural products included in conifer oleoresin secretions and volatile emissions; these compounds contribute to biotic and abiotic stress defense against herbivores and pathogens. Catalyzes the conversion of (2E)-geranyl diphosphate (GPP) to (+)-3-carene. This chain is (+)-3-carene synthase 2, chloroplastic, found in Pinus banksiana (Jack pine).